Reading from the N-terminus, the 68-residue chain is ATP synthase F(0) complex subunit 8 (68 aa).

The helical transmembrane segment at 8–24 (VWPTTITPMLLTLFLIT) threads the bilayer. N6-acetyllysine; alternate is present on Lys54. Lys54 is subject to N6-succinyllysine; alternate. Lys57 is modified (N6-acetyllysine).

It belongs to the ATPase protein 8 family. As to quaternary structure, component of the ATP synthase complex composed at least of ATP5F1A/subunit alpha, ATP5F1B/subunit beta, ATP5MC1/subunit c (homooctomer), MT-ATP6/subunit a, MT-ATP8/subunit 8, ATP5ME/subunit e, ATP5MF/subunit f, ATP5MG/subunit g, ATP5MK/subunit k, ATP5MJ/subunit j, ATP5F1C/subunit gamma, ATP5F1D/subunit delta, ATP5F1E/subunit epsilon, ATP5PF/subunit F6, ATP5PB/subunit b, ATP5PD/subunit d, ATP5PO/subunit OSCP. ATP synthase complex consists of a soluble F(1) head domain (subunits alpha(3) and beta(3)) - the catalytic core - and a membrane F(0) domain - the membrane proton channel (subunits c, a, 8, e, f, g, k and j). These two domains are linked by a central stalk (subunits gamma, delta, and epsilon) rotating inside the F1 region and a stationary peripheral stalk (subunits F6, b, d, and OSCP). Interacts with PRICKLE3.

Its subcellular location is the mitochondrion membrane. Subunit 8, of the mitochondrial membrane ATP synthase complex (F(1)F(0) ATP synthase or Complex V) that produces ATP from ADP in the presence of a proton gradient across the membrane which is generated by electron transport complexes of the respiratory chain. ATP synthase complex consist of a soluble F(1) head domain - the catalytic core - and a membrane F(1) domain - the membrane proton channel. These two domains are linked by a central stalk rotating inside the F(1) region and a stationary peripheral stalk. During catalysis, ATP synthesis in the catalytic domain of F(1) is coupled via a rotary mechanism of the central stalk subunits to proton translocation. In vivo, can only synthesize ATP although its ATP hydrolase activity can be activated artificially in vitro. Part of the complex F(0) domain. In Pan paniscus (Pygmy chimpanzee), this protein is ATP synthase F(0) complex subunit 8.